The following is a 248-amino-acid chain: Ribosomal RNA small subunit methyltransferase G (248 aa).

S-adenosyl-L-methionine contacts are provided by residues Gly-85, Phe-90, 137–138, and Arg-156; that span reads IE.

It belongs to the methyltransferase superfamily. RNA methyltransferase RsmG family.

The protein localises to the cytoplasm. In terms of biological role, specifically methylates the N7 position of a guanine in 16S rRNA. In Parasynechococcus marenigrum (strain WH8102), this protein is Ribosomal RNA small subunit methyltransferase G.